The primary structure comprises 725 residues: IML2-like protein YKR018C (725 aa).

Threonine 196 carries the phosphothreonine modification. Phosphoserine is present on residues serine 246, serine 377, and serine 380.

Belongs to the IML2 family.

It is found in the cytoplasm. Its subcellular location is the nucleus. In Saccharomyces cerevisiae (strain ATCC 204508 / S288c) (Baker's yeast), this protein is IML2-like protein YKR018C.